A 349-amino-acid chain; its full sequence is Methionine import ATP-binding protein MetN (349 aa).

Positions Ile-5–Val-245 constitute an ABC transporter domain. Residue Gly-37–Ser-44 coordinates ATP.

The protein belongs to the ABC transporter superfamily. Methionine importer (TC 3.A.1.24) family. The complex is composed of two ATP-binding proteins (MetN), two transmembrane proteins (MetI) and a solute-binding protein (MetQ).

The protein resides in the cell membrane. The catalysed reaction is L-methionine(out) + ATP + H2O = L-methionine(in) + ADP + phosphate + H(+). It catalyses the reaction D-methionine(out) + ATP + H2O = D-methionine(in) + ADP + phosphate + H(+). Its function is as follows. Part of the ABC transporter complex MetNIQ involved in methionine import. Responsible for energy coupling to the transport system. The sequence is that of Methionine import ATP-binding protein MetN from Lactobacillus johnsonii (strain CNCM I-12250 / La1 / NCC 533).